Here is a 333-residue protein sequence, read N- to C-terminus: Autoinducer 2 import system permease protein LsrC (333 aa).

9 helical membrane passes run 14–34, 39–59, 70–90, 93–113, 115–135, 157–177, 206–226, 252–272, and 284–304; these read LIAI…YFSL, LVFS…LVML, IAGL…SLSV, LLTL…VTWL, IPAI…MLLL, LNIS…AWIL, IQII…IVFA, GISL…AFFL, and LPAW…LIFD.

This sequence belongs to the binding-protein-dependent transport system permease family. AraH/RbsC subfamily. In terms of assembly, the complex is composed of two ATP-binding proteins (LsrA), two transmembrane proteins (LsrC and LsrD) and a solute-binding protein (LsrB).

The protein localises to the cell inner membrane. Functionally, part of the ABC transporter complex LsrABCD involved in autoinducer 2 (AI-2) import. Probably responsible for the translocation of the substrate across the membrane. The chain is Autoinducer 2 import system permease protein LsrC (lsrC) from Photorhabdus laumondii subsp. laumondii (strain DSM 15139 / CIP 105565 / TT01) (Photorhabdus luminescens subsp. laumondii).